The chain runs to 965 residues: Transmembrane channel-like protein 5 (965 aa).

Polar residues-rich tracts occupy residues 1-10 and 20-31; these read MSSFHKNSSY and SGSQNHTQNYLR. Positions 1 to 235 are disordered; it reads MSSFHKNSSY…GAEEGDVYSP (235 aa). At 1-417 the chain is on the extracellular side; the sequence is MSSFHKNSSY…YFSFLRWLLK (417 aa). Basic and acidic residues predominate over residues 61–70; sequence TNPDYHHSLA. Polar residues predominate over residues 166-181; sequence QGNSYHSGPRSHSNLP. Ser-248 carries the post-translational modification Phosphoserine. The chain crosses the membrane as a helical span at residues 418–438; the sequence is FNIFSFVMNFSFIIIPQFTVG. Topologically, residues 439 to 444 are cytoplasmic; it reads EKNTLQ. The chain crosses the membrane as a helical span at residues 445 to 467; sequence FTGLEFFTGAGYFRETVMYYGFY. At 468–484 the chain is on the extracellular side; sequence TNSTIRHRMGGASYNMQ. A helical membrane pass occupies residues 485–505; it reads LAYIFTIGACLVICFFSLLFS. Residues 506–578 are Cytoplasmic-facing; the sequence is MAKYFRNNFI…NQKLTRFSVH (73 aa). Residues 579–599 traverse the membrane as a helical segment; it reads VAAWLVSTGITAACCVAVYYL. At 600-613 the chain is on the extracellular side; that stretch reads AEYNSEFLKTHKNP. Residues 614-634 traverse the membrane as a helical segment; that stretch reads GAVLLLPFVVSCINLAVPRFY. Residues 635–657 lie on the Cytoplasmic side of the membrane; sequence SMFRLVERYEIPRQEVYVLLIRN. The helical transmembrane segment at 658–678 threads the bilayer; that stretch reads IFLKISIVGILCYYWLNIVAL. Residues 679–691 are Extracellular-facing; that stretch reads SGEECWETLIGQD. Residues 692–712 traverse the membrane as a helical segment; that stretch reads IYRLLLMDFVFSLADSLLGEF. Residues 713–747 lie on the Cytoplasmic side of the membrane; sequence LRRLIGMKFITSLSLQEFDIARNVLELIYAQTLAW. The chain crosses the membrane as a helical span at residues 748 to 768; the sequence is LGIFFCPLLPFIQMITLFIMF. Topologically, residues 769–794 are extracellular; it reads YVKNVSLMMNFQPPSKAWRASQMITF. Residues 795 to 815 form a helical membrane-spanning segment; it reads FIFLLFFPSFTGVLCTLAITI. Topologically, residues 816–859 are cytoplasmic; it reads WRLKPSADCGPFRGLPSFIQSIYSWIDTLSHRPGYLWVVWIYQN. A helical membrane pass occupies residues 860–880; sequence LIGSVHFFFILTLIVLIITYL. The Extracellular portion of the chain corresponds to 881 to 965; sequence YWQITEGRKV…RSMQEENAIA (85 aa).

This sequence belongs to the TMC family.

It is found in the membrane. Its function is as follows. Probable component of an ion channel. Molecular function hasn't been characterized yet. In Rattus norvegicus (Rat), this protein is Transmembrane channel-like protein 5.